Here is a 279-residue protein sequence, read N- to C-terminus: MQQYLKILTDVILLGEPRNDRTGTGTVSIFDSYAKFDLREGFPAVTTKRLAWKSVVGELLWFLSGSTNLHDLRVFTFGRDEGQWTIWTPNYEDQAISMGYDKGNLGPVYGKQWRNFGGRDQILELIEGLKNNPHGRRHLVSAWNVAELDKMALPPCHYGFQCYVSNDGYLDLKWTQRSVDCFLGLPFNIASYALLTHILAKLTGLKPRYLIFSGGDTHIYNDHMEQVEEQVKRKPRPLPTLVMPEFVDLYDLLENNTAAWSFHLEGYDPHPALKAKMSS.

Residues Arg21 and 136 to 137 (RR) each bind dUMP. Cys156 (nucleophile) is an active-site residue. DUMP contacts are provided by residues 177 to 180 (RSVD), Asn188, and 218 to 220 (HIY). Asp180 lines the (6R)-5,10-methylene-5,6,7,8-tetrahydrofolate pocket.

It belongs to the thymidylate synthase family.

It carries out the reaction dUMP + (6R)-5,10-methylene-5,6,7,8-tetrahydrofolate = 7,8-dihydrofolate + dTMP. Sythesizes the thymine necessary for the viral DNA replication. In Escherichia coli (Enterobacteria phage T5), this protein is Probable thymidylate synthase.